We begin with the raw amino-acid sequence, 413 residues long: Arginine deiminase (413 aa).

Residue C403 is the Amidino-cysteine intermediate of the active site.

This sequence belongs to the arginine deiminase family.

It localises to the cytoplasm. The enzyme catalyses L-arginine + H2O = L-citrulline + NH4(+). It functions in the pathway amino-acid degradation; L-arginine degradation via ADI pathway; carbamoyl phosphate from L-arginine: step 1/2. The sequence is that of Arginine deiminase from Clostridium perfringens (strain SM101 / Type A).